The sequence spans 265 residues: Small ribosomal subunit protein uS5 (265 aa).

The segment covering 1–25 (MADTTTAAQADQKPTRAFGAGRPQR) has biased composition (low complexity). The tract at residues 1–49 (MADTTTAAQADQKPTRAFGAGRPQRGAGGAPQRGGPRPQRGGQGETKSW) is disordered. A2 bears the N-acetylalanine mark. One can recognise an S5 DRBM domain in the interval 89-152 (LKDEVMKIVP…VAAKLSVIPV (64 aa)).

This sequence belongs to the universal ribosomal protein uS5 family.

In terms of biological role, component of the ribosome, a large ribonucleoprotein complex responsible for the synthesis of proteins in the cell. The small ribosomal subunit (SSU) binds messenger RNAs (mRNAs) and translates the encoded message by selecting cognate aminoacyl-transfer RNA (tRNA) molecules. The large subunit (LSU) contains the ribosomal catalytic site termed the peptidyl transferase center (PTC), which catalyzes the formation of peptide bonds, thereby polymerizing the amino acids delivered by tRNAs into a polypeptide chain. The nascent polypeptides leave the ribosome through a tunnel in the LSU and interact with protein factors that function in enzymatic processing, targeting, and the membrane insertion of nascent chains at the exit of the ribosomal tunnel. Plays a role in the assembly and function of the 40S ribosomal subunit. Mutations in this protein affects the control of translational fidelity. Involved in nucleolar processing of pre-18S ribosomal RNA and ribosome assembly. The sequence is that of Small ribosomal subunit protein uS5 (rps2) from Dictyostelium discoideum (Social amoeba).